Here is a 272-residue protein sequence, read N- to C-terminus: Lyso-glycine lipid O-acyltransferase (272 aa).

Belongs to the O-acyltransferase GlsA family.

It carries out the reaction a lyso-glycine lipid + a fatty acyl-[ACP] = a glycine lipid + holo-[ACP]. The catalysed reaction is N-[(3R)-3-hydroxyhexadecanoyl]-glycine + hexadecanoyl-[ACP] = N-[(3R)-3-(hexadecanoyloxy)hexadecanoyl]-glycine + holo-[ACP]. It participates in lipid metabolism. Functionally, is involved in the production of glycine lipids (GL), which are phosphorus-free membrane lipids important for fitness during growth of the human gut bacterium B.thetaiotaomicron in vivo and in vitro. Catalyzes the second step of GL biosynthesis, i.e. the O-acylation of the hydroxyl group of lyso-glycine lipids, resulting in the production of the mature diacylated glycine lipids. This chain is Lyso-glycine lipid O-acyltransferase, found in Bacteroides thetaiotaomicron (strain ATCC 29148 / DSM 2079 / JCM 5827 / CCUG 10774 / NCTC 10582 / VPI-5482 / E50).